The primary structure comprises 556 residues: 2-succinyl-5-enolpyruvyl-6-hydroxy-3-cyclohexene-1-carboxylate synthase (556 aa).

This sequence belongs to the TPP enzyme family. MenD subfamily. As to quaternary structure, homodimer. Requires Mg(2+) as cofactor. It depends on Mn(2+) as a cofactor. Thiamine diphosphate is required as a cofactor.

It catalyses the reaction isochorismate + 2-oxoglutarate + H(+) = 5-enolpyruvoyl-6-hydroxy-2-succinyl-cyclohex-3-ene-1-carboxylate + CO2. It functions in the pathway quinol/quinone metabolism; 1,4-dihydroxy-2-naphthoate biosynthesis; 1,4-dihydroxy-2-naphthoate from chorismate: step 2/7. It participates in quinol/quinone metabolism; menaquinone biosynthesis. Catalyzes the thiamine diphosphate-dependent decarboxylation of 2-oxoglutarate and the subsequent addition of the resulting succinic semialdehyde-thiamine pyrophosphate anion to isochorismate to yield 2-succinyl-5-enolpyruvyl-6-hydroxy-3-cyclohexene-1-carboxylate (SEPHCHC). The polypeptide is 2-succinyl-5-enolpyruvyl-6-hydroxy-3-cyclohexene-1-carboxylate synthase (Salmonella choleraesuis (strain SC-B67)).